Here is a 226-residue protein sequence, read N- to C-terminus: Deoxyribose-phosphate aldolase (226 aa).

Asp94 serves as the catalytic Proton donor/acceptor. Residue Lys156 is the Schiff-base intermediate with acetaldehyde of the active site. Lys185 serves as the catalytic Proton donor/acceptor.

This sequence belongs to the DeoC/FbaB aldolase family. DeoC type 1 subfamily.

The protein localises to the cytoplasm. The catalysed reaction is 2-deoxy-D-ribose 5-phosphate = D-glyceraldehyde 3-phosphate + acetaldehyde. Its pathway is carbohydrate degradation; 2-deoxy-D-ribose 1-phosphate degradation; D-glyceraldehyde 3-phosphate and acetaldehyde from 2-deoxy-alpha-D-ribose 1-phosphate: step 2/2. Functionally, catalyzes a reversible aldol reaction between acetaldehyde and D-glyceraldehyde 3-phosphate to generate 2-deoxy-D-ribose 5-phosphate. This is Deoxyribose-phosphate aldolase from Burkholderia orbicola (strain MC0-3).